The sequence spans 265 residues: Deoxyribose-phosphate aldolase 2 (265 aa).

The active-site Proton donor/acceptor is Asp-108. The active-site Schiff-base intermediate with acetaldehyde is the Lys-173. The active-site Proton donor/acceptor is Lys-207.

This sequence belongs to the DeoC/FbaB aldolase family. DeoC type 2 subfamily.

It localises to the cytoplasm. It carries out the reaction 2-deoxy-D-ribose 5-phosphate = D-glyceraldehyde 3-phosphate + acetaldehyde. Its pathway is carbohydrate degradation; 2-deoxy-D-ribose 1-phosphate degradation; D-glyceraldehyde 3-phosphate and acetaldehyde from 2-deoxy-alpha-D-ribose 1-phosphate: step 2/2. Its function is as follows. Catalyzes a reversible aldol reaction between acetaldehyde and D-glyceraldehyde 3-phosphate to generate 2-deoxy-D-ribose 5-phosphate. In Yersinia pestis, this protein is Deoxyribose-phosphate aldolase 2 (deoC2).